The sequence spans 210 residues: Large ribosomal subunit protein uL4 (210 aa).

Positions 44-77 (ARQGNASSKTRSEVRGGGRKPWRQKGTGRARAGS) are disordered. Residues 60 to 71 (GGRKPWRQKGTG) show a composition bias toward basic residues.

Belongs to the universal ribosomal protein uL4 family. As to quaternary structure, part of the 50S ribosomal subunit.

In terms of biological role, one of the primary rRNA binding proteins, this protein initially binds near the 5'-end of the 23S rRNA. It is important during the early stages of 50S assembly. It makes multiple contacts with different domains of the 23S rRNA in the assembled 50S subunit and ribosome. Functionally, forms part of the polypeptide exit tunnel. The polypeptide is Large ribosomal subunit protein uL4 (Microcystis aeruginosa (strain NIES-843 / IAM M-2473)).